Here is a 512-residue protein sequence, read N- to C-terminus: Transmembrane protein 102 (512 aa).

Residues 1 to 267 lie on the Extracellular side of the membrane; the sequence is MASAVWGNAP…EAWPTLCPAQ (267 aa). Residues 168 to 258 form a disordered region; the sequence is PVPGGRDWIH…PGPQPSEARE (91 aa). Basic and acidic residues-rich tracts occupy residues 174–186 and 195–209; these read DWIH…EGPR and PHSD…ESLE. Positions 210-226 are enriched in polar residues; that stretch reads KSPSNVSVPESPQQNLT. Residues 268-284 form a helical membrane-spanning segment; the sequence is VAAWFFASLAAVAESLF. Residues 285–512 are Cytoplasmic-facing; it reads PVPGAPRLVH…GLAGVGAGSH (228 aa).

As to quaternary structure, interacts with CSF2RB; this interaction occurs preferentially in the absence of CSF2.

It localises to the cell membrane. In terms of biological role, selectively involved in CSF2 deprivation-induced apoptosis via a mitochondria-dependent pathway. This chain is Transmembrane protein 102 (TMEM102), found in Bos taurus (Bovine).